A 102-amino-acid chain; its full sequence is Putative pterin-4-alpha-carbinolamine dehydratase (102 aa).

The protein belongs to the pterin-4-alpha-carbinolamine dehydratase family.

The catalysed reaction is (4aS,6R)-4a-hydroxy-L-erythro-5,6,7,8-tetrahydrobiopterin = (6R)-L-erythro-6,7-dihydrobiopterin + H2O. In Burkholderia multivorans (strain ATCC 17616 / 249), this protein is Putative pterin-4-alpha-carbinolamine dehydratase.